Here is a 395-residue protein sequence, read N- to C-terminus: Probable G-protein coupled receptor npr-29 (395 aa).

4 helical membrane-spanning segments follow: residues 38-58 (VVGFVINAWVLYVVAPLLFAP), 66-86 (ILFYIFALCVGDLMTMIAMLL), 89-109 (IELVFGTWQFSSMVCTSYLIF), and 148-168 (AIIQFCIAFAFVMILLWPVFA). A glycan (N-linked (GlcNAc...) asparagine) is linked at N180. 3 helical membrane-spanning segments follow: residues 202–222 (FWFNLIACITSYAVPLFGIIY), 252–272 (VITTVLLLTVIYVLCWTPYWV), and 287–307 (IIIISYFIHLLPYISCVAYPL).

It belongs to the G-protein coupled receptor 1 family.

The protein localises to the cell membrane. In terms of biological role, not known. Putative receptor. In Caenorhabditis elegans, this protein is Probable G-protein coupled receptor npr-29.